The sequence spans 398 residues: L-talarate/galactarate dehydratase (398 aa).

Residues 46-48 (DAK), 82-83 (KR), and lysine 195 each bind substrate. The active-site Proton acceptor is the lysine 197. Residue aspartate 226 participates in Mg(2+) binding. Asparagine 228 lines the substrate pocket. Mg(2+)-binding residues include glutamate 252 and glutamate 278. The active-site Proton donor/acceptor is histidine 328. Glutamate 348 contributes to the substrate binding site.

Belongs to the mandelate racemase/muconate lactonizing enzyme family. Homooctamer; tetramer of dimers. Mg(2+) is required as a cofactor.

It catalyses the reaction L-altrarate = 5-dehydro-4-deoxy-D-glucarate + H2O. The enzyme catalyses galactarate = 5-dehydro-4-deoxy-D-glucarate + H2O. The catalysed reaction is L-altrarate = galactarate. Its activity is regulated as follows. Competitively inhibited by tartronate. In terms of biological role, catalyzes the efficient dehydration of both L-talarate (also called L-altrarate) and galactarate to 5-keto-4-deoxy-D-glucarate (5-KDG). Also catalyzes the epimerization of L-talarate to galactarate; epimerization occurs in competition with dehydration. Is required for the utilization of L-talarate as a carbon source. Also functions in galactarate utilization. Is not active on other acid sugars. This Salmonella typhimurium (strain LT2 / SGSC1412 / ATCC 700720) protein is L-talarate/galactarate dehydratase.